A 204-amino-acid chain; its full sequence is Recombination protein RecR (204 aa).

The segment at 63–78 adopts a C4-type zinc-finger fold; that stretch reads CRICCNVADSELCPIC. Positions 86 to 181 constitute a Toprim domain; sequence NKICVVEQPQ…KVTRLARGLP (96 aa).

This sequence belongs to the RecR family.

May play a role in DNA repair. It seems to be involved in an RecBC-independent recombinational process of DNA repair. It may act with RecF and RecO. This chain is Recombination protein RecR, found in Dehalococcoides mccartyi (strain ATCC BAA-2100 / JCM 16839 / KCTC 5957 / BAV1).